A 388-amino-acid polypeptide reads, in one-letter code: Formate-dependent phosphoribosylglycinamide formyltransferase (388 aa).

Residues 20–21 (EL) and glutamate 80 contribute to the N(1)-(5-phospho-beta-D-ribosyl)glycinamide site. Residues arginine 112, lysine 153, 158 to 163 (SSGKGQ), 193 to 196 (EEFI), and glutamate 201 each bind ATP. Residues 117 to 306 (RLAFEKLGLR…EFEIHARAIL (190 aa)) form the ATP-grasp domain. Residues glutamate 265 and glutamate 277 each contribute to the Mg(2+) site. Residues aspartate 284, lysine 352, and 359 to 360 (RR) contribute to the N(1)-(5-phospho-beta-D-ribosyl)glycinamide site.

This sequence belongs to the PurK/PurT family. In terms of assembly, homodimer.

It carries out the reaction N(1)-(5-phospho-beta-D-ribosyl)glycinamide + formate + ATP = N(2)-formyl-N(1)-(5-phospho-beta-D-ribosyl)glycinamide + ADP + phosphate + H(+). The protein operates within purine metabolism; IMP biosynthesis via de novo pathway; N(2)-formyl-N(1)-(5-phospho-D-ribosyl)glycinamide from N(1)-(5-phospho-D-ribosyl)glycinamide (formate route): step 1/1. Involved in the de novo purine biosynthesis. Catalyzes the transfer of formate to 5-phospho-ribosyl-glycinamide (GAR), producing 5-phospho-ribosyl-N-formylglycinamide (FGAR). Formate is provided by PurU via hydrolysis of 10-formyl-tetrahydrofolate. The polypeptide is Formate-dependent phosphoribosylglycinamide formyltransferase (Methanococcus maripaludis (strain C7 / ATCC BAA-1331)).